The sequence spans 191 residues: Shikimate kinase (191 aa).

Position 14–19 (14–19 (GSGKST)) interacts with ATP. A Mg(2+)-binding site is contributed by S18. 3 residues coordinate substrate: D36, R60, and G82. R120 provides a ligand contact to ATP. R147 contributes to the substrate binding site.

The protein belongs to the shikimate kinase family. Monomer. The cofactor is Mg(2+).

It localises to the cytoplasm. It carries out the reaction shikimate + ATP = 3-phosphoshikimate + ADP + H(+). The protein operates within metabolic intermediate biosynthesis; chorismate biosynthesis; chorismate from D-erythrose 4-phosphate and phosphoenolpyruvate: step 5/7. In terms of biological role, catalyzes the specific phosphorylation of the 3-hydroxyl group of shikimic acid using ATP as a cosubstrate. This is Shikimate kinase from Chlorobaculum tepidum (strain ATCC 49652 / DSM 12025 / NBRC 103806 / TLS) (Chlorobium tepidum).